A 334-amino-acid chain; its full sequence is N-acetyl-gamma-glutamyl-phosphate reductase (334 aa).

The active site involves Cys154.

It belongs to the NAGSA dehydrogenase family. Type 1 subfamily.

Its subcellular location is the cytoplasm. The catalysed reaction is N-acetyl-L-glutamate 5-semialdehyde + phosphate + NADP(+) = N-acetyl-L-glutamyl 5-phosphate + NADPH + H(+). It functions in the pathway amino-acid biosynthesis; L-arginine biosynthesis; N(2)-acetyl-L-ornithine from L-glutamate: step 3/4. Its function is as follows. Catalyzes the NADPH-dependent reduction of N-acetyl-5-glutamyl phosphate to yield N-acetyl-L-glutamate 5-semialdehyde. This Salmonella typhi protein is N-acetyl-gamma-glutamyl-phosphate reductase.